The chain runs to 145 residues: Lipoprotein signal peptidase (145 aa).

The next 2 membrane-spanning stretches (helical) occupy residues 57–77 (LFFIVITVVVGIVLIYSMIKL) and 79–99 (ENSLYNYTLAMILGGAIGNLI). Active-site residues include Asp109 and Asp124. Residues 120–140 (FNVADSFIVVGAIILGYLMIF) traverse the membrane as a helical segment.

The protein belongs to the peptidase A8 family.

It localises to the cell membrane. The enzyme catalyses Release of signal peptides from bacterial membrane prolipoproteins. Hydrolyzes -Xaa-Yaa-Zaa-|-(S,diacylglyceryl)Cys-, in which Xaa is hydrophobic (preferably Leu), and Yaa (Ala or Ser) and Zaa (Gly or Ala) have small, neutral side chains.. The protein operates within protein modification; lipoprotein biosynthesis (signal peptide cleavage). This protein specifically catalyzes the removal of signal peptides from prolipoproteins. The polypeptide is Lipoprotein signal peptidase (Caldanaerobacter subterraneus subsp. tengcongensis (strain DSM 15242 / JCM 11007 / NBRC 100824 / MB4) (Thermoanaerobacter tengcongensis)).